The primary structure comprises 234 residues: Sugar fermentation stimulation protein A (234 aa).

The H-T-H motif DNA-binding region spans Leu201–Ser220.

Belongs to the SfsA family.

Functionally, binds to DNA non-specifically. Could be a regulatory factor involved in maltose metabolism. The sequence is that of Sugar fermentation stimulation protein A from Escherichia coli O127:H6 (strain E2348/69 / EPEC).